The following is a 276-amino-acid chain: NH(3)-dependent NAD(+) synthetase (276 aa).

47–54 (GISGGQDS) contributes to the ATP binding site. Asp53 contacts Mg(2+). Residue Arg141 participates in deamido-NAD(+) binding. Thr161 is a binding site for ATP. Glu166 provides a ligand contact to Mg(2+). The deamido-NAD(+) site is built by Lys174 and Asp181. Lys190 and Thr212 together coordinate ATP. 261–262 (HK) serves as a coordination point for deamido-NAD(+).

It belongs to the NAD synthetase family. Homodimer.

The enzyme catalyses deamido-NAD(+) + NH4(+) + ATP = AMP + diphosphate + NAD(+) + H(+). The protein operates within cofactor biosynthesis; NAD(+) biosynthesis; NAD(+) from deamido-NAD(+) (ammonia route): step 1/1. Functionally, catalyzes the ATP-dependent amidation of deamido-NAD to form NAD. Uses ammonia as a nitrogen source. In Levilactobacillus brevis (strain ATCC 367 / BCRC 12310 / CIP 105137 / JCM 1170 / LMG 11437 / NCIMB 947 / NCTC 947) (Lactobacillus brevis), this protein is NH(3)-dependent NAD(+) synthetase.